We begin with the raw amino-acid sequence, 610 residues long: Protein mono-ADP-ribosyltransferase PARP6 (610 aa).

Positions 374–600 constitute a PARP catalytic domain; sequence EMTQGSYLEI…QDPKIQKEIM (227 aa). ADP-ribosyl aspartic acid is present on Asp580.

This sequence belongs to the ARTD/PARP family. Auto-mono-ADP-ribosylated.

It catalyses the reaction L-aspartyl-[protein] + NAD(+) = 4-O-(ADP-D-ribosyl)-L-aspartyl-[protein] + nicotinamide. The enzyme catalyses L-cysteinyl-[protein] + NAD(+) = S-(ADP-D-ribosyl)-L-cysteinyl-[protein] + nicotinamide + H(+). Its function is as follows. Mono-ADP-ribosyltransferase that mediates mono-ADP-ribosylation of target proteins. The polypeptide is Protein mono-ADP-ribosyltransferase PARP6 (Pongo abelii (Sumatran orangutan)).